Consider the following 661-residue polypeptide: UvrABC system protein B (661 aa).

The 387-residue stretch at 28–414 (DGVNEGKRHQ…HTDEMVEQII (387 aa)) folds into the Helicase ATP-binding domain. 41-48 (GATGTGKT) contacts ATP. Residues 94-117 (YYDYYQPEAYVPSTDTFIEKDASI) carry the Beta-hairpin motif. Residues 432-598 (QIDDLLSEIQ…TINKKIHDVI (167 aa)) enclose the Helicase C-terminal domain. Positions 603–624 (ESDETNQQQQTELPKKMTKKER) are disordered. Residues 625-660 (QKTIENIEKEMKKAAKDLDFEKATELRDMLFELKAE) form the UVR domain.

The protein belongs to the UvrB family. As to quaternary structure, forms a heterotetramer with UvrA during the search for lesions. Interacts with UvrC in an incision complex.

Its subcellular location is the cytoplasm. Functionally, the UvrABC repair system catalyzes the recognition and processing of DNA lesions. A damage recognition complex composed of 2 UvrA and 2 UvrB subunits scans DNA for abnormalities. Upon binding of the UvrA(2)B(2) complex to a putative damaged site, the DNA wraps around one UvrB monomer. DNA wrap is dependent on ATP binding by UvrB and probably causes local melting of the DNA helix, facilitating insertion of UvrB beta-hairpin between the DNA strands. Then UvrB probes one DNA strand for the presence of a lesion. If a lesion is found the UvrA subunits dissociate and the UvrB-DNA preincision complex is formed. This complex is subsequently bound by UvrC and the second UvrB is released. If no lesion is found, the DNA wraps around the other UvrB subunit that will check the other stand for damage. The sequence is that of UvrABC system protein B from Staphylococcus epidermidis (strain ATCC 35984 / DSM 28319 / BCRC 17069 / CCUG 31568 / BM 3577 / RP62A).